Here is a 252-residue protein sequence, read N- to C-terminus: 2-succinyl-6-hydroxy-2,4-cyclohexadiene-1-carboxylate synthase (252 aa).

The protein belongs to the AB hydrolase superfamily. MenH family. As to quaternary structure, monomer.

It catalyses the reaction 5-enolpyruvoyl-6-hydroxy-2-succinyl-cyclohex-3-ene-1-carboxylate = (1R,6R)-6-hydroxy-2-succinyl-cyclohexa-2,4-diene-1-carboxylate + pyruvate. It participates in quinol/quinone metabolism; 1,4-dihydroxy-2-naphthoate biosynthesis; 1,4-dihydroxy-2-naphthoate from chorismate: step 3/7. The protein operates within quinol/quinone metabolism; menaquinone biosynthesis. Functionally, catalyzes a proton abstraction reaction that results in 2,5-elimination of pyruvate from 2-succinyl-5-enolpyruvyl-6-hydroxy-3-cyclohexene-1-carboxylate (SEPHCHC) and the formation of 2-succinyl-6-hydroxy-2,4-cyclohexadiene-1-carboxylate (SHCHC). In Salmonella enteritidis PT4 (strain P125109), this protein is 2-succinyl-6-hydroxy-2,4-cyclohexadiene-1-carboxylate synthase.